Consider the following 477-residue polypeptide: MSTVLYRCPELLIGGEWRPGRHEQRLVVRNPATGEPLDELRLASADDLQLALQTTQQAFEHWRQVPAHERCARLERGVARLRENTERIAHLLTLEQGKTLAEARMECAMAADLIKWYAEEARRVYGRVIPARLPNSRMEVFKFPVGPVAAFSPWNFPLVLSARKLGGAIAAGCSIVLKAAEETPASVAAMVDCLNQELPPGVVQLLYGVPAEVSQALIASPVVRKVTFTGSVPVGRHLAELSARHLKRITLELGGHAPVIVCGDADIARTVNLMVQHKFRNAGQACLAPTRFFVDRRIYGDFVDAFGAATQALRVGAGMAAETQMGPVASARRQAAVQDLIARSVAAGARPVASAVPEAGYFVAPTLLADVPLDAPVMSEEPFGPVACAVPFDSLDQAIAQANHNPYGLAGYLFTDSAKAILAVSERLEVGSLAVNGMGVSVPEAPFGGVKDSGYGSESGTEGMEAFLDTKFMHYVA.

NAD(+) contacts are provided by residues 154-155 (WN), 178-181 (KAAE), and 230-231 (GS). E252 acts as the Proton acceptor in catalysis. NAD(+) is bound at residue L253. C286 serves as the catalytic Nucleophile. E381 lines the NAD(+) pocket.

This sequence belongs to the aldehyde dehydrogenase family. Homodimer.

It carries out the reaction 4-(hydroxymethyl)benzenesulfonate + NAD(+) = 4-formylbenzenesulfonate + NADH + H(+). In terms of biological role, involved in the toluene-4-sulfonate degradation pathway. Does not discriminate between the sulfonate and the carboxyl substituents and can also be involved in the p-toluenecarboxylate degradation pathway. In Comamonas testosteroni (Pseudomonas testosteroni), this protein is Putative 4-(hydroxymethyl)benzenesulfonate dehydrogenase TsaD2 (tsaD2).